Here is a 356-residue protein sequence, read N- to C-terminus: Sensor protein BasS (356 aa).

The Cytoplasmic segment spans residues 1–13 (MRFQRRAMTLRQR). A helical membrane pass occupies residues 14–34 (LMLTIGLILLVFQLISTFWLW). Residues 35-64 (HESTEQIQLFEQALRDNRNNDRHIMHEIRE) lie on the Periplasmic side of the membrane. Residues 65–88 (AVASLIVPGVFMVSLTLLICYQAV) form a helical membrane-spanning segment. Positions 89 to 141 (RRITRPLAELQKELEARTADNLAPIAIHSSTLEIESVVSAINQLVTRLTTTLD) constitute an HAMP domain. Over 89–356 (RRITRPLAEL…TRAWVLLKKA (268 aa)) the chain is Cytoplasmic. The 208-residue stretch at 149–356 (DVAHELRTPL…TRAWVLLKKA (208 aa)) folds into the Histidine kinase domain. Phosphohistidine; by autocatalysis is present on His152.

Post-translationally, autophosphorylated.

Its subcellular location is the cell inner membrane. It carries out the reaction ATP + protein L-histidine = ADP + protein N-phospho-L-histidine.. Its function is as follows. Member of the two-component regulatory system BasS/BasR. Autophosphorylates and activates BasR by phosphorylation. Plays a role in the adaptation of the organism to the host environment, in particular to neutrophils, and therefore it plays a role in virulence as well. This Salmonella typhimurium (strain LT2 / SGSC1412 / ATCC 700720) protein is Sensor protein BasS (basS).